A 262-amino-acid chain; its full sequence is MTKQFAVIGNPIEQSRSPELHHAFAEKTGVDLNYQKRLAPLDGFESSMRSFFAEGGSGMNVTVPFKEQAFALCDVLTERAQIAKAVNTLWMENGKLHGDNTDGQGLVAAIQALEWNLENTTILILGAGGATRGVIYPLVQAGTQKIVIANRTLARAEQLVDDLKTAVPQAQLQAISLNDLEGDFDIVINATSASLSGDALQLPEKLQFKYAYEMAYGKPSSFLDQAKQRNVPYSEGFGMLVGQAIEAFYIWNGVRPQLKDFL.

Shikimate is bound by residues 15–17 (SRS) and threonine 62. The Proton acceptor role is filled by lysine 66. Glutamate 78 provides a ligand contact to NADP(+). Positions 87 and 102 each coordinate shikimate. NADP(+) is bound by residues 126-130 (GAGGA), 150-155 (NRTLAR), and methionine 214. Tyrosine 216 contributes to the shikimate binding site. Glycine 236 contributes to the NADP(+) binding site.

It belongs to the shikimate dehydrogenase family. As to quaternary structure, homodimer.

It catalyses the reaction shikimate + NADP(+) = 3-dehydroshikimate + NADPH + H(+). It functions in the pathway metabolic intermediate biosynthesis; chorismate biosynthesis; chorismate from D-erythrose 4-phosphate and phosphoenolpyruvate: step 4/7. Involved in the biosynthesis of the chorismate, which leads to the biosynthesis of aromatic amino acids. Catalyzes the reversible NADPH linked reduction of 3-dehydroshikimate (DHSA) to yield shikimate (SA). The protein is Shikimate dehydrogenase (NADP(+)) of Acinetobacter baumannii (strain ATCC 17978 / DSM 105126 / CIP 53.77 / LMG 1025 / NCDC KC755 / 5377).